The chain runs to 499 residues: Glycerol kinase (499 aa).

Position 12 (Thr12) interacts with ADP. Residues Thr12, Thr13, and Ser14 each contribute to the ATP site. Thr12 lines the sn-glycerol 3-phosphate pocket. Arg16 is an ADP binding site. 3 residues coordinate sn-glycerol 3-phosphate: Arg82, Glu83, and Tyr134. The glycerol site is built by Arg82, Glu83, and Tyr134. Phosphohistidine; by HPr is present on His230. Asp244 provides a ligand contact to sn-glycerol 3-phosphate. Residues Asp244 and Gln245 each contribute to the glycerol site. ADP contacts are provided by Thr266 and Gly309. ATP-binding residues include Thr266, Gly309, Gln313, and Gly410. ADP is bound by residues Gly410 and Asn414.

This sequence belongs to the FGGY kinase family. Homotetramer and homodimer (in equilibrium). The phosphoenolpyruvate-dependent sugar phosphotransferase system (PTS), including enzyme I, and histidine-containing protein (HPr) are required for the phosphorylation, which leads to the activation of the enzyme.

The enzyme catalyses glycerol + ATP = sn-glycerol 3-phosphate + ADP + H(+). It participates in polyol metabolism; glycerol degradation via glycerol kinase pathway; sn-glycerol 3-phosphate from glycerol: step 1/1. With respect to regulation, activated by phosphorylation and inhibited by fructose 1,6-bisphosphate (FBP). Its function is as follows. Key enzyme in the regulation of glycerol uptake and metabolism. Catalyzes the phosphorylation of glycerol to yield sn-glycerol 3-phosphate. The chain is Glycerol kinase from Staphylococcus epidermidis (strain ATCC 12228 / FDA PCI 1200).